Consider the following 83-residue polypeptide: Large ribosomal subunit protein uL24 (83 aa).

It belongs to the universal ribosomal protein uL24 family. As to quaternary structure, part of the 50S ribosomal subunit.

In terms of biological role, one of two assembly initiator proteins, it binds directly to the 5'-end of the 23S rRNA, where it nucleates assembly of the 50S subunit. Functionally, one of the proteins that surrounds the polypeptide exit tunnel on the outside of the subunit. This is Large ribosomal subunit protein uL24 from Symbiobacterium thermophilum (strain DSM 24528 / JCM 14929 / IAM 14863 / T).